The sequence spans 2104 residues: Phenolphthiocerol synthesis polyketide synthase type I Pks15/1 (2104 aa).

Residues 41 to 464 (TEPVAVVGIG…GTNAHVILEE (424 aa)) enclose the Ketosynthase family 3 (KS3) domain. Catalysis depends on for beta-ketoacyl synthase activity residues Cys211, His346, and His386. The tract at residues 571–887 (TAVVFPGQGS…GQLFSTGMSV (317 aa)) is acyltransferase. Catalysis depends on Ser662, which acts as the For acyltransferase activity. The N-terminal hotdog fold stretch occupies residues 935–1057 (HALLGAVVER…GMLGVEAASS (123 aa)). A dehydratase region spans residues 935 to 1095 (HALLGAVVER…YAYGPGFQGL (161 aa)). The region spanning 935–1207 (HALLGAVVER…TRAMSAAQLR (273 aa)) is the PKS/mFAS DH domain. The Proton acceptor; for dehydratase activity role is filled by His967. Residues 1069-1207 (AESVDISDGY…TRAMSAAQLR (139 aa)) are C-terminal hotdog fold. The Proton donor; for dehydratase activity role is filled by Asp1128. The enoylreductase stretch occupies residues 1400–1705 (GTLEDLVIEP…QARHIGKVVL (306 aa)). Residues 1530-1547 (VLIHAGTGGVGMAAVQLA) and 1719-1734 (TVLITGATGAVGAVLA) contribute to the NADP(+) site. The interval 1718-1899 (ATVLITGATG…SVAWGLWEQS (182 aa)) is beta-ketoacyl reductase (KR). A Carrier domain is found at 2004–2079 (DALVGLVCLQ…AIAEYVGRQI (76 aa)). The residue at position 2039 (Ser2039) is an O-(pantetheine 4'-phosphoryl)serine. Residues 2081–2104 (DSQATQAEEEKLPESDGEMVSVTA) form a disordered region.

This sequence belongs to the thiolase-like superfamily. Beta-ketoacyl-ACP synthases family. Pantetheine 4'-phosphate serves as cofactor.

It catalyses the reaction a fatty acyl-[ACP] + malonyl-[ACP] + H(+) = a 3-oxoacyl-[ACP] + holo-[ACP] + CO2. It participates in lipid metabolism; fatty acid biosynthesis. Functionally, catalyzes the elongation by iterative transfer of p-hydroxybenzoyl group from FadD22 (pHBA-S-FAdD22) to form p-hydroxyphenylalkanoate (pHPA) intermediates during phenolphthiocerol (PPOL) biosynthesis. PPOL is an important intermediate in the biosynthesis of phenolic glycolipid (mycosid B). This is Phenolphthiocerol synthesis polyketide synthase type I Pks15/1 (pks15/1) from Mycobacterium marinum (strain ATCC BAA-535 / M).